Here is a 1334-residue protein sequence, read N- to C-terminus: DNA-directed RNA polymerase subunit beta' (1334 aa).

4 residues coordinate Zn(2+): Cys213, Cys284, Cys291, and Cys294. Low complexity predominate over residues 1299-1308 (SSRGSSRFSR). A disordered region spans residues 1299 to 1334 (SSRGSSRFSRQPISDRWSEADEEGEEDDFEEDYEEE). Acidic residues predominate over residues 1318–1334 (ADEEGEEDDFEEDYEEE).

It belongs to the RNA polymerase beta' chain family. RpoC2 subfamily. As to quaternary structure, in cyanobacteria the RNAP catalytic core is composed of 2 alpha, 1 beta, 1 beta', 1 gamma and 1 omega subunit. When a sigma factor is associated with the core the holoenzyme is formed, which can initiate transcription. The cofactor is Zn(2+).

The enzyme catalyses RNA(n) + a ribonucleoside 5'-triphosphate = RNA(n+1) + diphosphate. Its function is as follows. DNA-dependent RNA polymerase catalyzes the transcription of DNA into RNA using the four ribonucleoside triphosphates as substrates. This is DNA-directed RNA polymerase subunit beta' from Microcystis aeruginosa (strain NIES-843 / IAM M-2473).